The chain runs to 589 residues: Growth factor receptor-bound protein 10 (589 aa).

Disordered stretches follow at residues 1–51 and 77–107; these read MALA…EDDV and LHNG…VPRS. Position 99 is a phosphoserine (Ser99). Ser145 bears the Phosphoserine; by MTOR, MAPK1 and MAPK3 mark. The Ras-associating domain maps to 161 to 245; sequence AKQDVKVFSE…SKFLFRKNYA (85 aa). Residues 285–394 form the PH domain; the sequence is CPEIQGFLHV…WMTAFRLLKY (110 aa). Ser413 carries the post-translational modification Phosphoserine; by MAPK1 and MAPK3; in vitro. Ser423 bears the Phosphoserine; by MTOR and PKB/AKT1 mark. At Ser426 the chain carries Phosphoserine. Ser471 bears the Phosphoserine; by MTOR, MAPK1 and MAPK3 mark. The SH2 domain occupies 488 to 584; the sequence is WFHGRISREE…VLPCKLKHHC (97 aa).

It belongs to the GRB7/10/14 family. Interacts with ligand-activated tyrosine kinase receptors, including FGFR1, INSR, IGF1R, MET and PDGFRB in a phosphotyrosine-dependent manner through the SH2 domain. Poorly binds to the EGFR. Directly interacts with MAP3K14/NIK and is recruited to the EGFR-ERBB2 complex. Interacts with GIGYF1/PERQ1 and GIGYF2/TNRC15. When unphosphorylated, interacts with AKT1 and when phosphorylated with YWHAE/14-3-3 epsilon. Interacts with NEDD4. Interacts with LRP6, thus interfering with the binding of AXIN1 to LRP6. Binds relatively non-specifically to several phosphoinositides, including PI(5)P, PI(4,5)P2, PI(3,4)P2 and PI(3,4,5)P3, with modest affinities through the PH domain. Binds to activated NRAS. Phosphorylated on serine residues upon EGF, FGF and PDGF stimulation.

It localises to the cytoplasm. Phosphorylation by mTORC1 stabilizes and activates GRB10 constituting a feedback pathway by which mTORC1 inhibits INSR-dependent signaling. Its function is as follows. Adapter protein which modulates coupling of a number of cell surface receptor kinases with specific signaling pathways. Binds to, and suppress signals from, activated receptors tyrosine kinases, including the insulin (INSR) and insulin-like growth factor (IGF1R) receptors. The inhibitory effect can be achieved by 2 mechanisms: interference with the signaling pathway and increased receptor degradation. Delays and reduces AKT1 phosphorylation in response to insulin stimulation. Blocks association between INSR and IRS1 and IRS2 and prevents insulin-stimulated IRS1 and IRS2 tyrosine phosphorylation. Recruits NEDD4 to IGF1R, leading to IGF1R ubiquitination, increased internalization and degradation by both the proteasomal and lysosomal pathways. A similar role in the mediation of ubiquitination also has been suggested with INSR. Negatively regulates Wnt signaling by interacting with LRP6 intracellular portion and interfering with the binding of AXIN1 to LRP6. Positive regulator of the KDR/VEGFR-2 signaling pathway. May inhibit NEDD4-mediated degradation of KDR/VEGFR-2. The sequence is that of Growth factor receptor-bound protein 10 (Grb10) from Sus scrofa (Pig).